Consider the following 940-residue polypeptide: Isoleucine--tRNA ligase (940 aa).

A 'HIGH' region motif is present at residues 58–68 (PYANGNIHIGH). Glu-563 serves as a coordination point for L-isoleucyl-5'-AMP. A 'KMSKS' region motif is present at residues 604 to 608 (KMSKS). Residue Lys-607 coordinates ATP. Residues Cys-903, Cys-906, Cys-923, and Cys-926 each contribute to the Zn(2+) site.

It belongs to the class-I aminoacyl-tRNA synthetase family. IleS type 1 subfamily. Monomer. Zn(2+) serves as cofactor.

It localises to the cytoplasm. It catalyses the reaction tRNA(Ile) + L-isoleucine + ATP = L-isoleucyl-tRNA(Ile) + AMP + diphosphate. Its function is as follows. Catalyzes the attachment of isoleucine to tRNA(Ile). As IleRS can inadvertently accommodate and process structurally similar amino acids such as valine, to avoid such errors it has two additional distinct tRNA(Ile)-dependent editing activities. One activity is designated as 'pretransfer' editing and involves the hydrolysis of activated Val-AMP. The other activity is designated 'posttransfer' editing and involves deacylation of mischarged Val-tRNA(Ile). This Buchnera aphidicola subsp. Acyrthosiphon pisum (strain 5A) protein is Isoleucine--tRNA ligase.